We begin with the raw amino-acid sequence, 335 residues long: Proline racemase (335 aa).

Catalysis depends on cysteine 91, which acts as the Proton acceptor. Cysteine 255 functions as the Proton donor in the catalytic mechanism.

It belongs to the proline racemase family. Homodimer.

It catalyses the reaction L-proline = D-proline. Functionally, catalyzes the reversible interconversion of L- and D-proline. Plays an important role in the regulation of intra- and extracellular amino acid pools, allowing the bacterium to profit from host precursors and enzymatic pathways. Strong B-cell mitogen. In Clostridioides difficile (strain 630) (Peptoclostridium difficile), this protein is Proline racemase.